The primary structure comprises 337 residues: Putative F-box protein At4g09870 (337 aa).

The 46-residue stretch at 1–46 (MSISELSQDLLEEILCRVPAISLKKLRSTCKLWNSLFIDKRVRNEL) folds into the F-box domain.

This chain is Putative F-box protein At4g09870, found in Arabidopsis thaliana (Mouse-ear cress).